A 442-amino-acid chain; its full sequence is Zuotin (442 aa).

Residues 49 to 84 (RQRHGRTFSEDERLEVKNKVQEEVKEESEDEEEDPA) form a disordered region. The residue at position 55 (Thr-55) is a Phosphothreonine. Basic and acidic residues predominate over residues 55–71 (TFSEDERLEVKNKVQEE). Phosphoserine occurs at positions 57 and 76. Acidic residues predominate over residues 72–83 (VKEESEDEEEDP). The region spanning 97–167 (DHYAVLGLSK…VRRRQFDSVD (71 aa)) is the J domain. Disordered stretches follow at residues 242–270 (DGESRDNKRFQEKKNRSERQKNKARDNAR) and 306–331 (GAREAAAAAQKKKEEEERRAAEEAAA). A compositionally biased stretch (basic and acidic residues) spans 316–330 (KKKEEEERRAAEEAA).

As to quaternary structure, RAC is a heterodimer of the Hsp70/DnaK-type chaperone ssz1 and the Hsp40/DnaJ-type chaperone zuo1. RAC associates with ribosomes via zuo1.

It localises to the cytoplasm. Component of the ribosome-associated complex (RAC), a heterodimeric chaperone complex involved in regulation of accurate translation termination and in folding or maintaining nascent polypeptides in a folding-competent state. RAC stimulates the ATPase activity of the ribosome-associated pool of Hsp70-type chaperones SSB1/SSB2 that bind to the nascent polypeptide chain. The polypeptide is Zuotin (zuo1) (Schizosaccharomyces pombe (strain 972 / ATCC 24843) (Fission yeast)).